A 120-amino-acid polypeptide reads, in one-letter code: Ubiquitin domain-containing protein TINCR (120 aa).

The Ubiquitin-like domain maps to 14 to 83; sequence YHIKVHLADE…LQDGSVLLLV (70 aa).

In terms of tissue distribution, detected in stratum corneum (at protein level).

The chain is Ubiquitin domain-containing protein TINCR from Homo sapiens (Human).